A 239-amino-acid chain; its full sequence is Calcium load-activated calcium channel (239 aa).

Residues 1–55 (MPRKRKCDLRAVRVGLLLGGGGVYGSRFRFTFPGCRALSPWRVRVQRRRCEMSTM) lie on the Lumenal side of the membrane. The chain crosses the membrane as a helical span at residues 56–83 (FADTLLIVFISVCTALLAEGITWVLVYR). Positions 83-140 (RTDKYKRLKAEVEKQSKKLEKKKETITESAGRQQKKKIERQEEKLKNNNRDLSMVRMK) form a coiled coil. Residues 84–137 (TDKYKRLKAEVEKQSKKLEKKKETITESAGRQQKKKIERQEEKLKNNNRDLSMV) lie on the Cytoplasmic side of the membrane. Residue S111 is modified to Phosphoserine. A helical membrane pass occupies residues 138–157 (RMKSMFAIGFCFTALMGMFN). Over 158–171 (SIFDGRVVAKLPFT) the chain is Lumenal. The stretch at 172–181 (PLSYIQGLSH) is an intramembrane region. Residues 182–191 (RNLLGDDTTD) lie on the Lumenal side of the membrane. The chain crosses the membrane as a helical span at residues 192–213 (CSFIFLYILCTMSIRQNIQKIL). Residues 214 to 239 (GLAPSRAATKQAGGFLGPPPPSGKFS) lie on the Cytoplasmic side of the membrane. The residue at position 239 (S239) is a Phosphoserine.

It belongs to the TMCO1 family. In terms of assembly, homodimer and homotetramer. Homodimer under resting conditions; forms homotetramers following ER calcium overload. Component of the GET- and EMC-like (GEL) complex, composed of RAB5IF/OPTI and TMCO1. The GEL complex is part of the multi-pass translocon (MPT) complex, composed of three subcomplexes, the GEL complex (composed of RAB5IF/OPTI and TMCO1), the BOS complex (composed of NCLN/Nicalin, NOMO and TMEM147) and the PAT complex (composed of WDR83OS/Asterix and CCDC47). The MPT complex associates with the SEC61 complex. Widely expressed in adult and fetal tissues, with higher levels in thymus, prostate, testis and small intestine and lower levels in brain, placenta, lung and kidney. Present in most tissues in the eye, including the trabecular meshwork and retina (at protein level).

It localises to the endoplasmic reticulum membrane. Its subcellular location is the golgi apparatus membrane. It is found in the mitochondrion membrane. The enzyme catalyses Ca(2+)(in) = Ca(2+)(out). In terms of biological role, endoplasmic reticulum (ER) calcium-selective channel preventing intracellular Ca2(+) stores from overfilling and maintaining calcium homeostasis in the ER. In response to endoplasmic reticulum (ER) Ca2(+) overloading, assembles into a homotetramer, forming a functional calcium-selective channel facilitating Ca2(+) release. Mediates ER Ca2(+) homeostasis in osteoblasts and plays a key role in bone formation, via the CaMKII-HDAC4-RUNX2 signaling axis. Component of the multi-pass translocon (MPT) complex that mediates insertion of multi-pass membrane proteins into the lipid bilayer of membranes. The MPT complex takes over after the SEC61 complex: following membrane insertion of the first few transmembrane segments of proteins by the SEC61 complex, the MPT complex occludes the lateral gate of the SEC61 complex to promote insertion of subsequent transmembrane regions. Within the MPT complex, the GEL subcomplex may mediate insertion of transmembrane regions into the membrane. This Homo sapiens (Human) protein is Calcium load-activated calcium channel.